Reading from the N-terminus, the 146-residue chain is Peptidyl-lysine N-acetyltransferase YiaC (146 aa).

Residues 1–143 (MIREAQRSEL…PTWIMSWPVV (143 aa)) form the N-acetyltransferase domain.

Belongs to the acetyltransferase family.

The enzyme catalyses L-lysyl-[protein] + acetyl-CoA = N(6)-acetyl-L-lysyl-[protein] + CoA + H(+). Its function is as follows. N-epsilon-lysine acetyltransferase that catalyzes acetylation of a large number of proteins. Overexpression inhibits motility. The chain is Peptidyl-lysine N-acetyltransferase YiaC (yiaC) from Escherichia coli (strain K12).